A 533-amino-acid chain; its full sequence is CTP synthase (533 aa).

Positions 1 to 265 (MTKFIFVTGG…PAYLARRLGL (265 aa)) are amidoligase domain. Position 13 (serine 13) interacts with CTP. Serine 13 provides a ligand contact to UTP. 14–19 (GLGKGI) lines the ATP pocket. Tyrosine 54 is an L-glutamine binding site. Aspartate 71 serves as a coordination point for ATP. 2 residues coordinate Mg(2+): aspartate 71 and glutamate 139. Residues 146-148 (DIE), 186-191 (KTKPTQ), and lysine 222 each bind CTP. UTP-binding positions include 186–191 (KTKPTQ) and lysine 222. The Glutamine amidotransferase type-1 domain occupies 290–532 (EIAIVGKYVK…VEAAKKKKYG (243 aa)). An L-glutamine-binding site is contributed by glycine 351. The active-site Nucleophile; for glutamine hydrolysis is the cysteine 378. L-glutamine is bound by residues 379-382 (FGFQ), glutamate 402, and arginine 459. Active-site residues include histidine 505 and glutamate 507.

It belongs to the CTP synthase family. As to quaternary structure, homotetramer.

The catalysed reaction is UTP + L-glutamine + ATP + H2O = CTP + L-glutamate + ADP + phosphate + 2 H(+). It carries out the reaction L-glutamine + H2O = L-glutamate + NH4(+). It catalyses the reaction UTP + NH4(+) + ATP = CTP + ADP + phosphate + 2 H(+). Its pathway is pyrimidine metabolism; CTP biosynthesis via de novo pathway; CTP from UDP: step 2/2. Its activity is regulated as follows. Allosterically activated by GTP, when glutamine is the substrate; GTP has no effect on the reaction when ammonia is the substrate. The allosteric effector GTP functions by stabilizing the protein conformation that binds the tetrahedral intermediate(s) formed during glutamine hydrolysis. Inhibited by the product CTP, via allosteric rather than competitive inhibition. Its function is as follows. Catalyzes the ATP-dependent amination of UTP to CTP with either L-glutamine or ammonia as the source of nitrogen. Regulates intracellular CTP levels through interactions with the four ribonucleotide triphosphates. The sequence is that of CTP synthase from Thermococcus kodakarensis (strain ATCC BAA-918 / JCM 12380 / KOD1) (Pyrococcus kodakaraensis (strain KOD1)).